Reading from the N-terminus, the 287-residue chain is Undecaprenyl-diphosphatase (287 aa).

7 helical membrane-spanning segments follow: residues 6–26 (LHLL…FIPV), 45–65 (SGKV…MWIF), 89–109 (NLLL…KSIK), 111–131 (VFYH…IMLW), 204–224 (ATEF…VYDL), 238–258 (AIAV…RAVL), and 266–286 (YRVF…WIYA).

The protein belongs to the UppP family.

It localises to the cell inner membrane. It catalyses the reaction di-trans,octa-cis-undecaprenyl diphosphate + H2O = di-trans,octa-cis-undecaprenyl phosphate + phosphate + H(+). Catalyzes the dephosphorylation of undecaprenyl diphosphate (UPP). Confers resistance to bacitracin. This is Undecaprenyl-diphosphatase from Bordetella bronchiseptica (strain ATCC BAA-588 / NCTC 13252 / RB50) (Alcaligenes bronchisepticus).